The sequence spans 1235 residues: Phosphorylase b kinase regulatory subunit alpha, liver isoform (1235 aa).

The tract at residues F636 to E655 is disordered. 3 positions are modified to phosphoserine: S695, S729, and S735. The tract at residues L807–L837 is calmodulin-binding. S983, S1015, and S1044 each carry phosphoserine. The interval S1033–W1060 is disordered. A compositionally biased stretch (low complexity) spans S1039–G1055. The interval G1059–S1099 is calmodulin-binding. C1232 carries the S-farnesyl cysteine lipid modification.

The protein belongs to the phosphorylase b kinase regulatory chain family. Hexadecamer of 4 heterotetramers, each composed of alpha, beta, gamma, and delta subunits. Alpha (PHKA1 or PHKA2) and beta (PHKB) are regulatory subunits, gamma (PHKG1 or PHKG2) is the catalytic subunit, and delta is calmodulin. In terms of processing, although the final Cys may be farnesylated, the terminal tripeptide is probably not removed, and the C-terminus is not methylated.

The protein resides in the cell membrane. It functions in the pathway glycan biosynthesis; glycogen metabolism. By phosphorylation of various serine residues and by calcium. Its function is as follows. Phosphorylase b kinase catalyzes the phosphorylation of serine in certain substrates, including troponin I. The alpha chain may bind calmodulin. The sequence is that of Phosphorylase b kinase regulatory subunit alpha, liver isoform (Phka2) from Mus musculus (Mouse).